A 141-amino-acid polypeptide reads, in one-letter code: Nucleoside triphosphatase NudI (141 aa).

Residues 1–141 (MRQRTIVCPL…RHTLALKGLL (141 aa)) form the Nudix hydrolase domain. The Nudix box signature appears at 38–59 (GGVEPGERIEEALRREVREELG).

The protein belongs to the Nudix hydrolase family. NudI subfamily. As to quaternary structure, monomer. Mg(2+) is required as a cofactor.

It catalyses the reaction a ribonucleoside 5'-triphosphate + H2O = a ribonucleoside 5'-phosphate + diphosphate + H(+). The catalysed reaction is a 2'-deoxyribonucleoside 5'-triphosphate + H2O = a 2'-deoxyribonucleoside 5'-phosphate + diphosphate + H(+). It carries out the reaction dUTP + H2O = dUMP + diphosphate + H(+). The enzyme catalyses dTTP + H2O = dTMP + diphosphate + H(+). It catalyses the reaction dCTP + H2O = dCMP + diphosphate + H(+). Catalyzes the hydrolysis of nucleoside triphosphates, with a preference for pyrimidine deoxynucleoside triphosphates (dUTP, dTTP and dCTP). The sequence is that of Nucleoside triphosphatase NudI from Salmonella agona (strain SL483).